The sequence spans 84 residues: Esculentin-1Vb (84 aa).

The signal sequence occupies residues 1 to 22; the sequence is MFTLKKPLLLIVLLGIISLSLC. The propeptide occupies 23–36; that stretch reads EQERNADEDEESET. Cys78 and Cys84 are disulfide-bonded.

In terms of tissue distribution, expressed by the skin glands.

The protein resides in the secreted. Antimicrobial peptide. This Odorrana versabilis (Chinese bamboo leaf odorous frog) protein is Esculentin-1Vb.